We begin with the raw amino-acid sequence, 255 residues long: Phosphatidylcholine synthase (255 aa).

The Cytoplasmic segment spans residues methionine 1–tyrosine 13. The helical transmembrane segment at phenylalanine 14–leucine 34 threads the bilayer. Residues tyrosine 35–tyrosine 42 are Periplasmic-facing. The helical transmembrane segment at valine 43–alanine 63 threads the bilayer. The Cytoplasmic portion of the chain corresponds to arginine 64–aspartate 76. A helical transmembrane segment spans residues glycine 77 to leucine 97. Over leucine 98 to methionine 103 the chain is Periplasmic. A helical membrane pass occupies residues leucine 104–phenylalanine 124. Residues cysteine 125–aspartate 133 lie on the Cytoplasmic side of the membrane. A helical membrane pass occupies residues histidine 134–asparagine 154. A topological domain (periplasmic) is located at residue threonine 155. A helical membrane pass occupies residues serine 156–valine 175. Over lysine 176–arginine 190 the chain is Cytoplasmic. A helical transmembrane segment spans residues valine 191–leucine 211. Over valine 212–threonine 217 the chain is Periplasmic. A helical transmembrane segment spans residues asparagine 218–tyrosine 238. The Cytoplasmic segment spans residues arginine 239 to aspartate 255.

It belongs to the CDP-alcohol phosphatidyltransferase class-I family. It depends on Mn(2+) as a cofactor.

The protein localises to the cell inner membrane. The enzyme catalyses a CDP-1,2-diacyl-sn-glycerol + choline = a 1,2-diacyl-sn-glycero-3-phosphocholine + CMP + H(+). Condenses choline with CDP-diglyceride to produce phosphatidylcholine and CMP. Affects virulence of this bacterium when there is a complete loss of phosphatidylcholine formation due to absence of both the synthase (pcs) and the methylation (pmtA) pathways. Reduced virulence results from lowered yields of bacteria within host macrophages and because of loss of high multiplicity cytotoxicity. This chain is Phosphatidylcholine synthase, found in Legionella pneumophila subsp. pneumophila (strain Philadelphia 1 / ATCC 33152 / DSM 7513).